A 489-amino-acid polypeptide reads, in one-letter code: Rhamnulokinase (489 aa).

13–17 provides a ligand contact to ATP; the sequence is ASSGR. Cysteines 68 and 222 form a disulfide. Residues glycine 83 and 236–238 contribute to the substrate site; that span reads HDT. Catalysis depends on aspartate 237, which acts as the Proton acceptor. ATP is bound at residue threonine 259. Asparagine 296 provides a ligand contact to substrate. Glutamine 304 is a binding site for ATP. Residues cysteine 353 and cysteine 370 are joined by a disulfide bond. Position 402 (glycine 402) interacts with ATP. Cysteine 413 and cysteine 417 are joined by a disulfide.

Belongs to the rhamnulokinase family. The cofactor is Mg(2+).

It carries out the reaction L-rhamnulose + ATP = L-rhamnulose 1-phosphate + ADP + H(+). It functions in the pathway carbohydrate degradation; L-rhamnose degradation; glycerone phosphate from L-rhamnose: step 2/3. Its function is as follows. Involved in the catabolism of L-rhamnose (6-deoxy-L-mannose). Catalyzes the transfer of the gamma-phosphate group from ATP to the 1-hydroxyl group of L-rhamnulose to yield L-rhamnulose 1-phosphate. The protein is Rhamnulokinase of Shigella sonnei (strain Ss046).